Consider the following 489-residue polypeptide: Metal cation symporter ZIP14 (489 aa).

A signal peptide spans 1–28 (MKRLHPALPSCLLLVLFGIWRTAPQTHA). Residues 29 to 155 (SSAGLPPLSA…PSAIEVWGYG (127 aa)) are Extracellular-facing. Asn-52, Asn-75, Asn-85, and Asn-100 each carry an N-linked (GlcNAc...) asparagine glycan. A helical transmembrane segment spans residues 156-176 (FLCVTVISLCSLMGASVVPFM). Topologically, residues 177-184 (KKTFYKRL) are cytoplasmic. The helical transmembrane segment at 185–205 (LLYFIALAIGTLYSNALFQLI) threads the bilayer. Residues 206-221 (PEAFGFNPQDNYVSKS) are Extracellular-facing. The chain crosses the membrane as a helical span at residues 222-242 (AVVFGGFYLFFFTEKILKMLL). The Cytoplasmic portion of the chain corresponds to 243–349 (KQKNEHHHGH…SDGLHNFIDG (107 aa)). Positions 248–255 (HHHGHNHF) match the HHHGHXHX-motif motif. The helical transmembrane segment at 350-370 (LAIGASFTVSVFQGISTSVAI) threads the bilayer. Topologically, residues 371–394 (LCEEFPHELGDFVILLNAGMSIQQ) are extracellular. The XEXPHE-motif signature appears at 373–378 (EEFPHE). Residues 395–415 (ALFFNFLSACCCYLGLAFGIL) form a helical membrane-spanning segment. At 416–421 (AGSHFS) the chain is on the cytoplasmic side. A helical membrane pass occupies residues 422-442 (ANWIFALAGGMFLYIALADMF). The Extracellular segment spans residues 443–457 (PEMNEVCQEDEKNDS). A helical membrane pass occupies residues 458–478 (FLVPFVIQNLGLLTGFSIMLV). Over 479–489 (LTMYSGQIQIG) the chain is Cytoplasmic.

This sequence belongs to the ZIP transporter (TC 2.A.5) family. As to quaternary structure, homotrimer. Ubiquitinated. Ubiquitination occurs upon iron depletion. The ubiquitinated form undergoes proteasomal degradation. Post-translationally, N-glycosylated. N-glycosylation at Asn-100 is required for iron-regulated extraction of the transporter from membranes and subsequent proteasomal degradation. In terms of tissue distribution, widely expressed. Highly and transiently expressed during the early stage of adipocyte differentiation. Strongly expressed in liver, preadipocyte, duodenum and jejunum, moderately in brain, heart, skeletal muscle, spleen, pancreas, kidney and white adipose cells. Expression is almost undetectable in lung, testis and brown adipose cells. Expressed by chondrocytes and pituitary cells. As to expression, more strongly expressed in brain. More strongly expressed in liver, kidney and duodenum.

It is found in the cell membrane. The protein localises to the apical cell membrane. It localises to the basolateral cell membrane. The protein resides in the early endosome membrane. Its subcellular location is the late endosome membrane. It is found in the lysosome membrane. It carries out the reaction Zn(2+)(out) + 2 hydrogencarbonate(out) = Zn(2+)(in) + 2 hydrogencarbonate(in). The catalysed reaction is Mn(2+)(out) + 2 hydrogencarbonate(out) = Mn(2+)(in) + 2 hydrogencarbonate(in). The enzyme catalyses Fe(2+)(out) + 2 hydrogencarbonate(out) = Fe(2+)(in) + 2 hydrogencarbonate(in). It catalyses the reaction Cd(2+)(out) + 2 hydrogencarbonate(out) = Cd(2+)(in) + 2 hydrogencarbonate(in). With respect to regulation, inhibited by cyanide and therefore dependent of an energy source. Inhibited by DIDS/4,4'-diisothiocyanatostilbene-2,2'-disulfonic acid, an inhibitor hydrogencarbonate-dependent transporters. In terms of biological role, electroneutral transporter of the plasma membrane mediating the cellular uptake of the divalent metal cations zinc, manganese and iron that are important for tissue homeostasis, metabolism, development and immunity. Functions as an energy-dependent symporter, transporting through the membranes an electroneutral complex composed of a divalent metal cation and two bicarbonate anions. Beside these endogenous cellular substrates, can also import cadmium a non-essential metal which is cytotoxic and carcinogenic. Controls the cellular uptake by the intestinal epithelium of systemic zinc, which is in turn required to maintain tight junctions and the intestinal permeability. Modifies the activity of zinc-dependent phosphodiesterases, thereby indirectly regulating G protein-coupled receptor signaling pathways important for gluconeogenesis and chondrocyte differentiation. Regulates insulin receptor signaling, glucose uptake, glycogen synthesis and gluconeogenesis in hepatocytes through the zinc-dependent intracellular catabolism of insulin. Through zinc cellular uptake also plays a role in the adaptation of cells to endoplasmic reticulum stress. Major manganese transporter of the basolateral membrane of intestinal epithelial cells, it plays a central role in manganese systemic homeostasis through intestinal manganese uptake. Also involved in manganese extracellular uptake by cells of the blood-brain barrier. May also play a role in manganese and zinc homeostasis participating in their elimination from the blood through the hepatobiliary excretion. Also functions in the extracellular uptake of free iron. May also function intracellularly and mediate the transport from endosomes to cytosol of iron endocytosed by transferrin. Plays a role in innate immunity by regulating the expression of cytokines by activated macrophages. The polypeptide is Metal cation symporter ZIP14 (Mus musculus (Mouse)).